Here is a 252-residue protein sequence, read N- to C-terminus: 3-dehydroquinate dehydratase (252 aa).

Residues Ser21, 46 to 48 (EWR), and Arg82 each bind 3-dehydroquinate. The active-site Proton donor/acceptor is His143. Catalysis depends on Lys170, which acts as the Schiff-base intermediate with substrate. Residues Arg213, Ser232, and Gln236 each coordinate 3-dehydroquinate.

This sequence belongs to the type-I 3-dehydroquinase family. In terms of assembly, homodimer.

It carries out the reaction 3-dehydroquinate = 3-dehydroshikimate + H2O. The protein operates within metabolic intermediate biosynthesis; chorismate biosynthesis; chorismate from D-erythrose 4-phosphate and phosphoenolpyruvate: step 3/7. Involved in the third step of the chorismate pathway, which leads to the biosynthesis of aromatic amino acids. Catalyzes the cis-dehydration of 3-dehydroquinate (DHQ) and introduces the first double bond of the aromatic ring to yield 3-dehydroshikimate. This chain is 3-dehydroquinate dehydratase, found in Escherichia coli O139:H28 (strain E24377A / ETEC).